We begin with the raw amino-acid sequence, 427 residues long: Imidazolonepropionase (427 aa).

His-96 and His-98 together coordinate Fe(3+). Positions 96 and 98 each coordinate Zn(2+). 4-imidazolone-5-propanoate-binding residues include Arg-105, Tyr-168, and His-201. Tyr-168 provides a ligand contact to N-formimidoyl-L-glutamate. His-265 is a Fe(3+) binding site. His-265 contributes to the Zn(2+) binding site. Gln-268 is a 4-imidazolone-5-propanoate binding site. Position 340 (Asp-340) interacts with Fe(3+). Asp-340 serves as a coordination point for Zn(2+). N-formimidoyl-L-glutamate-binding residues include Asn-342 and Gly-344. Thr-345 contacts 4-imidazolone-5-propanoate.

This sequence belongs to the metallo-dependent hydrolases superfamily. HutI family. The cofactor is Zn(2+). Requires Fe(3+) as cofactor.

It is found in the cytoplasm. It catalyses the reaction 4-imidazolone-5-propanoate + H2O = N-formimidoyl-L-glutamate. It participates in amino-acid degradation; L-histidine degradation into L-glutamate; N-formimidoyl-L-glutamate from L-histidine: step 3/3. Functionally, catalyzes the hydrolytic cleavage of the carbon-nitrogen bond in imidazolone-5-propanoate to yield N-formimidoyl-L-glutamate. It is the third step in the universal histidine degradation pathway. The chain is Imidazolonepropionase from Psychrobacter cryohalolentis (strain ATCC BAA-1226 / DSM 17306 / VKM B-2378 / K5).